Consider the following 241-residue polypeptide: Glutathione S-transferase theta-3 (241 aa).

Residues 2–82 form the GST N-terminal domain; that stretch reads GLELYLDLMS…YLSRKYKAPD (81 aa). Glutathione contacts are provided by residues 53-54 and 66-67; these read KV and ES. The region spanning 88–222 is the GST C-terminal domain; that stretch reads DLQTRARVDE…VVLKAKDMPP (135 aa).

This sequence belongs to the GST superfamily. Theta family. As to quaternary structure, homodimer. As to expression, expressed strongly in liver, and at lower levels in kidney and testis.

Its subcellular location is the cytoplasm. It catalyses the reaction RX + glutathione = an S-substituted glutathione + a halide anion + H(+). Its function is as follows. Conjugation of reduced glutathione to a wide number of exogenous and endogenous hydrophobic electrophiles. Shows high activity towards 4-nitrobenzyl chloride (4-NBC). Also has lower activity towards 1,2-epoxy-3-(p-nitrophenoxy)propane (EPNP), cumene hydroperoxide, 1-chloro-2,4-dinitrobenzene (CDNB), 7-chloro-4-nitrobenzo-2-oxa-1,3-diazole (NBD-Cl), and ethacrynic acid. The protein is Glutathione S-transferase theta-3 of Mus musculus (Mouse).